The chain runs to 273 residues: Dermonecrotic toxin LhSicTox-alphaIA2avi (273 aa).

H5 is an active-site residue. 2 residues coordinate Mg(2+): E25 and D27. Catalysis depends on H41, which acts as the Nucleophile. Disulfide bonds link C45–C51 and C47–C190. Position 85 (D85) interacts with Mg(2+).

The protein belongs to the arthropod phospholipase D family. Class II subfamily. Mg(2+) serves as cofactor. In terms of tissue distribution, expressed by the venom gland.

Its subcellular location is the secreted. It carries out the reaction an N-(acyl)-sphingosylphosphocholine = an N-(acyl)-sphingosyl-1,3-cyclic phosphate + choline. The enzyme catalyses an N-(acyl)-sphingosylphosphoethanolamine = an N-(acyl)-sphingosyl-1,3-cyclic phosphate + ethanolamine. The catalysed reaction is a 1-acyl-sn-glycero-3-phosphocholine = a 1-acyl-sn-glycero-2,3-cyclic phosphate + choline. It catalyses the reaction a 1-acyl-sn-glycero-3-phosphoethanolamine = a 1-acyl-sn-glycero-2,3-cyclic phosphate + ethanolamine. Dermonecrotic toxins cleave the phosphodiester linkage between the phosphate and headgroup of certain phospholipids (sphingolipid and lysolipid substrates), forming an alcohol (often choline) and a cyclic phosphate. This toxin acts on sphingomyelin (SM). It may also act on ceramide phosphoethanolamine (CPE), lysophosphatidylcholine (LPC) and lysophosphatidylethanolamine (LPE), but not on lysophosphatidylserine (LPS), and lysophosphatidylglycerol (LPG). It acts by transphosphatidylation, releasing exclusively cyclic phosphate products as second products. Induces dermonecrosis, hemolysis, increased vascular permeability, edema, inflammatory response, and platelet aggregation. The chain is Dermonecrotic toxin LhSicTox-alphaIA2avi from Loxosceles hirsuta (Recluse spider).